The chain runs to 498 residues: ATP synthase subunit beta, chloroplastic (498 aa).

172–179 (GGAGVGKT) provides a ligand contact to ATP.

This sequence belongs to the ATPase alpha/beta chains family. In terms of assembly, F-type ATPases have 2 components, CF(1) - the catalytic core - and CF(0) - the membrane proton channel. CF(1) has five subunits: alpha(3), beta(3), gamma(1), delta(1), epsilon(1). CF(0) has four main subunits: a(1), b(1), b'(1) and c(9-12).

It localises to the plastid. It is found in the chloroplast thylakoid membrane. The catalysed reaction is ATP + H2O + 4 H(+)(in) = ADP + phosphate + 5 H(+)(out). Its function is as follows. Produces ATP from ADP in the presence of a proton gradient across the membrane. The catalytic sites are hosted primarily by the beta subunits. The chain is ATP synthase subunit beta, chloroplastic from Idiospermum australiense (Ribbonwood tree).